Consider the following 118-residue polypeptide: UPF0342 protein BT9727_0768 (118 aa).

Belongs to the UPF0342 family.

The sequence is that of UPF0342 protein BT9727_0768 from Bacillus thuringiensis subsp. konkukian (strain 97-27).